A 390-amino-acid polypeptide reads, in one-letter code: Transforming growth factor beta-1 proprotein (390 aa).

The N-terminal stretch at 1-29 (MPPSGLRLLPLLLPLLWLLMLTPGRPVAG) is a signal peptide. Residues 30–74 (LSTCKTIDMELVKRKGIEAIRGQILSKLRLASPPSQGDVPPGPLP) form a straightjacket domain region. The tract at residues 75-271 (EAILALYNST…ATPLERAQHL (197 aa)) is arm domain. 3 N-linked (GlcNAc...) asparagine glycosylation sites follow: Asn-82, Asn-136, and Asn-176. The tract at residues 226-252 (DSKDNTLQVDINGFSSGRRGDLATIHG) is bowtie tail. The Cell attachment site motif lies at 244 to 246 (RGD). Disulfide bonds link Cys-285-Cys-294, Cys-293-Cys-356, Cys-322-Cys-387, and Cys-326-Cys-389.

Belongs to the TGF-beta family. In terms of assembly, homodimer; disulfide-linked. Interacts with the serine proteases, HTRA1 and HTRA3: the interaction with either inhibits TGFB1-mediated signaling and the HTRA protease activity is required for this inhibition. May interact with THSD4; this interaction may lead to sequestration by FBN1 microfibril assembly and attenuation of TGFB signaling. Interacts with CD109, DPT and ASPN. Interacts with EFEMP2. Interacts with TSKU; the interaction contributes to regulation of the hair cycle. Interacts with TGFBR3. As to quaternary structure, homodimer; disulfide-linked. Interacts with transforming growth factor beta-1 (TGF-beta-1) chain; interaction is non-covalent and maintains TGF-beta-1 in a latent state; each latency-associated peptide (LAP) monomer interacts with TGF-beta-1 in the other monomer. Interacts with LTBP1; leading to regulation of TGF-beta-1 activation. Interacts with LRRC32/GARP; leading to regulation of TGF-beta-1 activation on the surface of activated regulatory T-cells (Tregs). Interacts with LRRC33/NRROS; leading to regulation of TGF-beta-1 activation in macrophages and microglia. Interacts (via cell attachment site) with integrins ITGAV and ITGB6 (ITGAV:ITGB6), leading to release of the active TGF-beta-1. Interacts with NREP; the interaction results in a decrease in TGFB1 autoinduction. Interacts with HSP90AB1; inhibits latent TGFB1 activation. Homodimer; disulfide-linked. Interacts with TGF-beta receptors (TGFBR1 and TGFBR2), leading to signal transduction. Transforming growth factor beta-1 proprotein: The precursor proprotein is cleaved in the Golgi apparatus by FURIN to form Transforming growth factor beta-1 (TGF-beta-1) and Latency-associated peptide (LAP) chains, which remain non-covalently linked, rendering TGF-beta-1 inactive. In terms of processing, N-glycosylated. Deglycosylation leads to activation of Transforming growth factor beta-1 (TGF-beta-1); mechanisms triggering deglycosylation-driven activation of TGF-beta-1 are however unclear.

The protein resides in the secreted. The protein localises to the extracellular space. Its subcellular location is the extracellular matrix. Its function is as follows. Transforming growth factor beta-1 proprotein: Precursor of the Latency-associated peptide (LAP) and Transforming growth factor beta-1 (TGF-beta-1) chains, which constitute the regulatory and active subunit of TGF-beta-1, respectively. Required to maintain the Transforming growth factor beta-1 (TGF-beta-1) chain in a latent state during storage in extracellular matrix. Associates non-covalently with TGF-beta-1 and regulates its activation via interaction with 'milieu molecules', such as LTBP1, LRRC32/GARP and LRRC33/NRROS, that control activation of TGF-beta-1. Interaction with LRRC33/NRROS regulates activation of TGF-beta-1 in macrophages and microglia. Interaction with LRRC32/GARP controls activation of TGF-beta-1 on the surface of activated regulatory T-cells (Tregs). Interaction with integrins (ITGAV:ITGB6 or ITGAV:ITGB8) results in distortion of the Latency-associated peptide chain and subsequent release of the active TGF-beta-1. Functionally, multifunctional protein that regulates the growth and differentiation of various cell types and is involved in various processes, such as normal development, immune function, microglia function and responses to neurodegeneration. Activation into mature form follows different steps: following cleavage of the proprotein in the Golgi apparatus, Latency-associated peptide (LAP) and Transforming growth factor beta-1 (TGF-beta-1) chains remain non-covalently linked rendering TGF-beta-1 inactive during storage in extracellular matrix. At the same time, LAP chain interacts with 'milieu molecules', such as LTBP1, LRRC32/GARP and LRRC33/NRROS that control activation of TGF-beta-1 and maintain it in a latent state during storage in extracellular milieus. TGF-beta-1 is released from LAP by integrins (ITGAV:ITGB6 or ITGAV:ITGB8): integrin-binding to LAP stabilizes an alternative conformation of the LAP bowtie tail and results in distortion of the LAP chain and subsequent release of the active TGF-beta-1. Once activated following release of LAP, TGF-beta-1 acts by binding to TGF-beta receptors (TGFBR1 and TGFBR2), which transduce signal. While expressed by many cells types, TGF-beta-1 only has a very localized range of action within cell environment thanks to fine regulation of its activation by Latency-associated peptide chain (LAP) and 'milieu molecules'. Plays an important role in bone remodeling: acts as a potent stimulator of osteoblastic bone formation, causing chemotaxis, proliferation and differentiation in committed osteoblasts. Can promote either T-helper 17 cells (Th17) or regulatory T-cells (Treg) lineage differentiation in a concentration-dependent manner. At high concentrations, leads to FOXP3-mediated suppression of RORC and down-regulation of IL-17 expression, favoring Treg cell development. At low concentrations in concert with IL-6 and IL-21, leads to expression of the IL-17 and IL-23 receptors, favoring differentiation to Th17 cells. Stimulates sustained production of collagen through the activation of CREB3L1 by regulated intramembrane proteolysis (RIP). Mediates SMAD2/3 activation by inducing its phosphorylation and subsequent translocation to the nucleus. Positively regulates odontoblastic differentiation in dental papilla cells, via promotion of IPO7-mediated translocation of phosphorylated SMAD2 to the nucleus and subsequent transcription of target genes. Can induce epithelial-to-mesenchymal transition (EMT) and cell migration in various cell types. The sequence is that of Transforming growth factor beta-1 proprotein (TGFB1) from Ovis aries (Sheep).